Here is a 40-residue protein sequence, read N- to C-terminus: SDSKIGDGCFGLPLDHIGSVSGLGCNRPVQNRPKQIPGGS.

C9 and C25 are joined by a disulfide. Positions 36–40 are excised as a propeptide; it reads IPGGS.

It belongs to the natriuretic peptide family. As to expression, expressed by the venom gland.

The protein resides in the secreted. Snake venom natriuretic peptide that targets both NPR1 and NPR2. Exhibits hypotensive and vasodepressor activities. This is Natriuretic peptide PaNP-b from Pseudechis australis (Mulga snake).